The following is a 201-amino-acid chain: Urease accessory protein UreG (201 aa).

A GTP-binding site is contributed by 12–19; it reads GPVGSGKT.

This sequence belongs to the SIMIBI class G3E GTPase family. UreG subfamily. As to quaternary structure, homodimer. UreD, UreF and UreG form a complex that acts as a GTP-hydrolysis-dependent molecular chaperone, activating the urease apoprotein by helping to assemble the nickel containing metallocenter of UreC. The UreE protein probably delivers the nickel.

It is found in the cytoplasm. In terms of biological role, facilitates the functional incorporation of the urease nickel metallocenter. This process requires GTP hydrolysis, probably effectuated by UreG. This is Urease accessory protein UreG from Dechloromonas aromatica (strain RCB).